We begin with the raw amino-acid sequence, 1437 residues long: DNA polymerase III PolC-type (1437 aa).

The 157-residue stretch at tyrosine 420–cysteine 576 folds into the Exonuclease domain.

This sequence belongs to the DNA polymerase type-C family. PolC subfamily.

It is found in the cytoplasm. It carries out the reaction DNA(n) + a 2'-deoxyribonucleoside 5'-triphosphate = DNA(n+1) + diphosphate. Required for replicative DNA synthesis. This DNA polymerase also exhibits 3' to 5' exonuclease activity. The sequence is that of DNA polymerase III PolC-type from Pediococcus pentosaceus (strain ATCC 25745 / CCUG 21536 / LMG 10740 / 183-1w).